A 348-amino-acid chain; its full sequence is Phenylalanine--tRNA ligase alpha subunit (348 aa).

E259 contacts Mg(2+).

Belongs to the class-II aminoacyl-tRNA synthetase family. Phe-tRNA synthetase alpha subunit type 1 subfamily. As to quaternary structure, tetramer of two alpha and two beta subunits. Mg(2+) is required as a cofactor.

It is found in the cytoplasm. It carries out the reaction tRNA(Phe) + L-phenylalanine + ATP = L-phenylalanyl-tRNA(Phe) + AMP + diphosphate + H(+). The protein is Phenylalanine--tRNA ligase alpha subunit of Enterococcus faecalis (strain ATCC 700802 / V583).